Here is a 79-residue protein sequence, read N- to C-terminus: Acyl carrier protein (79 aa).

A Carrier domain is found at 2–77 (SEIGERVKKI…DATKFLEKNA (76 aa)). Ser-37 carries the post-translational modification O-(pantetheine 4'-phosphoryl)serine.

Belongs to the acyl carrier protein (ACP) family. In terms of processing, 4'-phosphopantetheine is transferred from CoA to a specific serine of apo-ACP by AcpS. This modification is essential for activity because fatty acids are bound in thioester linkage to the sulfhydryl of the prosthetic group.

The protein resides in the cytoplasm. It functions in the pathway lipid metabolism; fatty acid biosynthesis. In terms of biological role, carrier of the growing fatty acid chain in fatty acid biosynthesis. The chain is Acyl carrier protein from Afipia carboxidovorans (strain ATCC 49405 / DSM 1227 / KCTC 32145 / OM5) (Oligotropha carboxidovorans).